The sequence spans 354 residues: tRNA-specific 2-thiouridylase MnmA (354 aa).

ATP contacts are provided by residues 6-13 (LLSGGVDS) and Leu33. The active-site Nucleophile is the Cys100. An intrachain disulfide couples Cys100 to Cys195. Gly123 contacts ATP. The interval 145 to 147 (KDQ) is interaction with tRNA. Cys195 acts as the Cysteine persulfide intermediate in catalysis.

It belongs to the MnmA/TRMU family.

Its subcellular location is the cytoplasm. It carries out the reaction S-sulfanyl-L-cysteinyl-[protein] + uridine(34) in tRNA + AH2 + ATP = 2-thiouridine(34) in tRNA + L-cysteinyl-[protein] + A + AMP + diphosphate + H(+). Functionally, catalyzes the 2-thiolation of uridine at the wobble position (U34) of tRNA, leading to the formation of s(2)U34. The sequence is that of tRNA-specific 2-thiouridylase MnmA from Borrelia turicatae (strain 91E135).